We begin with the raw amino-acid sequence, 3434 residues long: Genome polyprotein (3434 aa).

The tract at residues 2-15 (SKKPGGPGKPRVVN) is interaction with host EXOC1. The Cytoplasmic portion of the chain corresponds to 2 to 110 (SKKPGGPGKP…KQKKRGGSET (109 aa)). A hydrophobic; homodimerization of capsid protein C region spans residues 37–72 (LLDGRGPIRFVLALLAFFRFTALAPTKALMRRWKSV). The propeptide at 106 to 125 (GGSETSVLMLIFMLIGFAAA) is ER anchor for the capsid protein C, removed in mature form by serine protease NS3. Residues 111–131 (SVLMLIFMLIGFAAALKLSTF) form a helical membrane-spanning segment. The Extracellular segment spans residues 132 to 251 (QGKIMMTVNA…ATRYLTKTEN (120 aa)). A glycan (N-linked (GlcNAc...) asparagine; by host) is linked at asparagine 140. A helical transmembrane segment spans residues 252 to 272 (WIIRNPGYALVAVVLGWMLGS). At 273 to 277 (NTGQK) the chain is on the cytoplasmic side. Residues 278–292 (VIFTVLLLLVAPAYS) form a helical membrane-spanning segment. Residues 293-745 (FNCLGMSSRD…QVFGGAFRTL (453 aa)) lie on the Extracellular side of the membrane. 6 disulfide bridges follow: cysteine 295-cysteine 322, cysteine 352-cysteine 408, cysteine 352-cysteine 413, cysteine 366-cysteine 397, cysteine 384-cysteine 408, and cysteine 384-cysteine 413. Residues 390 to 403 (DRGWGNGCGLFGKG) form a fusion peptide region. Asparagine 446 carries N-linked (GlcNAc...) asparagine; by host glycosylation. Disulfide bonds link cysteine 482/cysteine 580 and cysteine 597/cysteine 628. The chain crosses the membrane as a helical span at residues 746 to 766 (FGGMSWISPGLLGALLLWMGV). Residues 767 to 772 (NARDKS) are Cytoplasmic-facing. The chain crosses the membrane as a helical span at residues 773 to 793 (IALAFLATGGVLLFLATNVHA). Residues 794–1218 (DTGCAIDITR…AFAESNNGGD (425 aa)) lie on the Extracellular side of the membrane. 2 disulfide bridges follow: cysteine 797-cysteine 808 and cysteine 848-cysteine 936. Asparagine 923 and asparagine 968 each carry an N-linked (GlcNAc...) asparagine; by host glycan. 4 cysteine pairs are disulfide-bonded: cysteine 972-cysteine 1016, cysteine 1073-cysteine 1122, cysteine 1084-cysteine 1105, and cysteine 1106-cysteine 1109. An N-linked (GlcNAc...) (high mannose) asparagine; by host glycan is attached at asparagine 1000. The chain crosses the membrane as a helical span at residues 1219–1239 (VIHLALIAVFKVQPAFLVASL). The Cytoplasmic portion of the chain corresponds to 1240–1249 (TRSRWTNQEN). A helical transmembrane segment spans residues 1250–1270 (LVLVLGAAFFQMAASDLELTI). Residues 1271–1286 (PGLLNSAATAWMVLRA) lie on the Lumenal side of the membrane. A helical membrane pass occupies residues 1287-1307 (MAFPSTSAIAMPMLAMLAPGM). Residue arginine 1308 is a topological domain, cytoplasmic. The helical transmembrane segment at 1309-1329 (MLHLDTYRIVLLLIGICSLLN) threads the bilayer. At 1330–1340 (ERRRSVEKKKG) the chain is on the lumenal side. Residues 1341–1361 (AVLIGLALTSTGYFSPTIMAA) form a helical membrane-spanning segment. The Cytoplasmic segment spans residues 1362-1373 (GLMICNPNKKRG). The helical transmembrane segment at 1374 to 1394 (WPATEVLTAVGLMFAIVGGLA) threads the bilayer. The Lumenal segment spans residues 1395–1397 (ELD). The helical transmembrane segment at 1398–1418 (IDSMSVPFTIAGLMLVSYVIS) threads the bilayer. At 1419–1475 (GKATDMWLERAADVSWEAGAAITGTSERLDVQLDDDGDFHLLNDPGVPWKIWVLRMT) the chain is on the cytoplasmic side. The interacts with and activates NS3 protease stretch occupies residues 1426-1465 (LERAADVSWEAGAAITGTSERLDVQLDDDGDFHLLNDPGV). The helical intramembrane region spans 1476–1496 (CLSVAAITPRAILPSAFGYWL). Over 1497-2172 (TLKYTKRGGV…RMALEELPDA (676 aa)) the chain is Cytoplasmic. In terms of domain architecture, Peptidase S7 spans 1504–1681 (GGVFWDTPSP…ERVEEPVPEA (178 aa)). Active-site charge relay system; for serine protease NS3 activity residues include histidine 1554, aspartate 1578, and serine 1638. A Helicase ATP-binding domain is found at 1684 to 1840 (PEMLKKRQLT…DTNSPVHDVS (157 aa)). Positions 1688–1691 (KKRQ) are important for RNA-binding. 1697-1704 (LHPGAGKT) is a binding site for ATP. The DEAH box motif lies at 1788-1791 (DEAH). The 166-residue stretch at 1851 to 2016 (GFEWITDYAG…GLVAQLYGPE (166 aa)) folds into the Helicase C-terminal domain. At lysine 1892 the chain carries N6-acetyllysine; by host. The tract at residues 1958 to 1979 (AAQRRGRVGRNPSQIGDEYHYG) is disordered. A regulates the ATPase activity of NS3 helicase region spans residues 2167–2171 (EELPD). The helical transmembrane segment at 2173–2193 (LETITLIAALGVMTAGFFLLM) threads the bilayer. Topologically, residues 2194–2197 (MQRK) are lumenal. Positions 2198–2218 (GIGKLGLGALVLVVATFFLWM) form an intramembrane region, helical. Over 2219–2220 (SD) the chain is Lumenal. A helical membrane pass occupies residues 2221–2241 (VSGTKIAGVLLLALLMMVVLI). The Cytoplasmic portion of the chain corresponds to 2242-2256 (PEPEKQRSQTDNQLA). A helical membrane pass occupies residues 2257 to 2271 (VFLICVLLVVGLVAA). Topologically, residues 2272–2309 (NEYGMLERTKTDIRNLFGKSLIEENEVHIPPFDFFTLD) are lumenal. An intramembrane region (helical) is located at residues 2310-2330 (LKPATAWALYGGSTVVLTPLI). Over 2331–2366 (KHLVTSQYVTTSLASINAQAGSLFTLPKGIPFTDFD) the chain is Lumenal. The chain crosses the membrane as a helical span at residues 2367 to 2394 (LSVALVFLGCWGQVTLTTLIMATILVTL). Residues 2395–2446 (HYGYLLPGWQAEALRAAQKRTAAGIMKNAVVDGIVATDVPELERTTPQMQKR) are Cytoplasmic-facing. Residues 2447-2467 (LGQILLVLASVAAVCVNPRIT) traverse the membrane as a helical segment. The Lumenal segment spans residues 2468–2498 (TIREAGILCTAAALTLWDNNASAAWNSTTAT). A helical transmembrane segment spans residues 2499 to 2519 (GLCHVMRGSWIAGASIAWTLI). At 2520 to 3434 (KNAEKPAFKR…ETHVSEDRVL (915 aa)) the chain is on the cytoplasmic side. One can recognise an mRNA cap 0-1 NS5-type MT domain in the interval 2530–2795 (GRAGGRTLGE…DVNLGSGTRA (266 aa)). Serine 2585 provides a ligand contact to S-adenosyl-L-methionine. Serine 2585 carries the post-translational modification Phosphoserine. The active-site For 2'-O-MTase activity is the lysine 2590. 6 residues coordinate S-adenosyl-L-methionine: glycine 2615, tryptophan 2616, threonine 2633, lysine 2634, aspartate 2660, and valine 2661. The active-site For 2'-O-MTase activity is aspartate 2675. Residue isoleucine 2676 coordinates S-adenosyl-L-methionine. Catalysis depends on for 2'-O-MTase activity residues lysine 2711 and glutamate 2747. Tyrosine 2749 provides a ligand contact to S-adenosyl-L-methionine. Positions 2969, 2973, 2978, and 2981 each coordinate Zn(2+). Residues 3059-3211 (GKIYADDTAG…KPLDDRFSTA (153 aa)) enclose the RdRp catalytic domain. Zn(2+)-binding residues include histidine 3246, cysteine 3262, and cysteine 3381.

It in the N-terminal section; belongs to the class I-like SAM-binding methyltransferase superfamily. mRNA cap 0-1 NS5-type methyltransferase family. As to quaternary structure, homodimer. Interacts (via N-terminus) with host EXOC1 (via C-terminus); this interaction results in EXOC1 degradation through the proteasome degradation pathway. In terms of assembly, forms heterodimers with envelope protein E in the endoplasmic reticulum and Golgi. Homodimer; in the endoplasmic reticulum and Golgi. Interacts with protein prM. Interacts with non-structural protein 1. As to quaternary structure, homodimer; Homohexamer when secreted. Interacts with envelope protein E. NS1 interacts with NS4B. Interacts with host complement protein CFH; this interaction leads to the degradation of C3. In terms of assembly, interacts (via N-terminus) with serine protease NS3. Forms a heterodimer with serine protease NS3. May form homooligomers. As to quaternary structure, forms a heterodimer with NS2B. Interacts with non-structural protein 2A (via N-terminus). Interacts with NS4B. Interacts with unphosphorylated RNA-directed RNA polymerase NS5; this interaction stimulates RNA-directed RNA polymerase NS5 guanylyltransferase activity. In terms of assembly, interacts with serine protease NS3. Homodimer. Interacts with host STAT2; this interaction inhibits the phosphorylation of the latter, and, when all viral proteins are present (polyprotein), targets STAT2 for degradation. Interacts with serine protease NS3. In terms of processing, specific enzymatic cleavages in vivo yield mature proteins. Cleavages in the lumen of endoplasmic reticulum are performed by host signal peptidase, whereas cleavages in the cytoplasmic side are performed by serine protease NS3. Signal cleavage at the 2K-4B site requires a prior NS3 protease-mediated cleavage at the 4A-2K site. Post-translationally, cleaved in post-Golgi vesicles by a host furin, releasing the mature small envelope protein M, and peptide pr. This cleavage is incomplete as up to 30% of viral particles still carry uncleaved prM. N-glycosylated. In terms of processing, N-glycosylated. The excreted form is glycosylated and this is required for efficient secretion of the protein from infected cells. Post-translationally, acetylated by host KAT5. Acetylation modulates NS3 RNA-binding and unwinding activities and plays an important positive role for viral replication. Phosphorylated on serines residues. This phosphorylation may trigger NS5 nuclear localization.

The protein localises to the virion. The protein resides in the host nucleus. It localises to the host cytoplasm. Its subcellular location is the host perinuclear region. It is found in the secreted. The protein localises to the virion membrane. The protein resides in the host endoplasmic reticulum membrane. It carries out the reaction Selective hydrolysis of -Xaa-Xaa-|-Yaa- bonds in which each of the Xaa can be either Arg or Lys and Yaa can be either Ser or Ala.. The catalysed reaction is RNA(n) + a ribonucleoside 5'-triphosphate = RNA(n+1) + diphosphate. It catalyses the reaction a ribonucleoside 5'-triphosphate + H2O = a ribonucleoside 5'-diphosphate + phosphate + H(+). The enzyme catalyses ATP + H2O = ADP + phosphate + H(+). It carries out the reaction a 5'-end (5'-triphosphoguanosine)-ribonucleoside in mRNA + S-adenosyl-L-methionine = a 5'-end (N(7)-methyl 5'-triphosphoguanosine)-ribonucleoside in mRNA + S-adenosyl-L-homocysteine. The catalysed reaction is a 5'-end (N(7)-methyl 5'-triphosphoguanosine)-ribonucleoside in mRNA + S-adenosyl-L-methionine = a 5'-end (N(7)-methyl 5'-triphosphoguanosine)-(2'-O-methyl-ribonucleoside) in mRNA + S-adenosyl-L-homocysteine + H(+). Functionally, plays a role in virus budding by binding to the cell membrane and gathering the viral RNA into a nucleocapsid that forms the core of a mature virus particle. During virus entry, may induce genome penetration into the host cytoplasm after hemifusion induced by the surface proteins. Can migrate to the cell nucleus where it modulates host functions. Overcomes the anti-viral effects of host EXOC1 by sequestering and degrading the latter through the proteasome degradation pathway. Its function is as follows. Inhibits RNA silencing by interfering with host Dicer. Prevents premature fusion activity of envelope proteins in trans-Golgi by binding to envelope protein E at pH6.0. After virion release in extracellular space, gets dissociated from E dimers. In terms of biological role, acts as a chaperone for envelope protein E during intracellular virion assembly by masking and inactivating envelope protein E fusion peptide. prM is the only viral peptide matured by host furin in the trans-Golgi network probably to avoid catastrophic activation of the viral fusion activity in acidic Golgi compartment prior to virion release. prM-E cleavage is inefficient, and many virions are only partially matured. These uncleaved prM would play a role in immune evasion. Functionally, may play a role in virus budding. Exerts cytotoxic effects by activating a mitochondrial apoptotic pathway through M ectodomain. May display a viroporin activity. Its function is as follows. Binds to host cell surface receptor and mediates fusion between viral and cellular membranes. Envelope protein is synthesized in the endoplasmic reticulum in the form of heterodimer with protein prM. They play a role in virion budding in the ER, and the newly formed immature particle is covered with 60 spikes composed of heterodimer between precursor prM and envelope protein E. The virion is transported to the Golgi apparatus where the low pH causes dissociation of PrM-E heterodimers and formation of E homodimers. prM-E cleavage is inefficient, and many virions are only partially matured. These uncleaved prM would play a role in immune evasion. Involved in immune evasion, pathogenesis and viral replication. Once cleaved off the polyprotein, is targeted to three destinations: the viral replication cycle, the plasma membrane and the extracellular compartment. Essential for viral replication. Required for formation of the replication complex and recruitment of other non-structural proteins to the ER-derived membrane structures. Excreted as a hexameric lipoparticle that plays a role against host immune response. Antagonizing the complement function. Binds to the host macrophages and dendritic cells. Inhibits signal transduction originating from Toll-like receptor 3 (TLR3). In terms of biological role, component of the viral RNA replication complex that functions in virion assembly and antagonizes the host alpha/beta interferon antiviral response. Functionally, required cofactor for the serine protease function of NS3. May have membrane-destabilizing activity and form viroporins. Its function is as follows. Displays three enzymatic activities: serine protease, NTPase and RNA helicase. NS3 serine protease, in association with NS2B, performs its autocleavage and cleaves the polyprotein at dibasic sites in the cytoplasm: C-prM, NS2A-NS2B, NS2B-NS3, NS3-NS4A, NS4A-2K and NS4B-NS5. NS3 RNA helicase binds RNA and unwinds dsRNA in the 3' to 5' direction. Regulates the ATPase activity of the NS3 helicase activity. NS4A allows NS3 helicase to conserve energy during unwinding. In terms of biological role, functions as a signal peptide for NS4B and is required for the interferon antagonism activity of the latter. Functionally, induces the formation of ER-derived membrane vesicles where the viral replication takes place. Inhibits interferon (IFN)-induced host STAT1 phosphorylation and nuclear translocation, thereby preventing the establishment of cellular antiviral state by blocking the IFN-alpha/beta pathway. Inhibits STAT2 translocation in the nucleus after IFN-alpha treatment. Its function is as follows. Replicates the viral (+) and (-) RNA genome, and performs the capping of genomes in the cytoplasm. NS5 methylates viral RNA cap at guanine N-7 and ribose 2'-O positions. Besides its role in RNA genome replication, also prevents the establishment of cellular antiviral state by blocking the interferon-alpha/beta (IFN-alpha/beta) signaling pathway. Inhibits host TYK2 and STAT2 phosphorylation, thereby preventing activation of JAK-STAT signaling pathway. This chain is Genome polyprotein, found in Culex annulirostris (Common banded mosquito).